The sequence spans 18562 residues: Titin homolog (18562 aa).

The Ig-like 1 domain maps to P90–T176. The interval R384–E404 is disordered. 4 consecutive Ig-like domains span residues P406–T493, P821–N913, P943–S1038, and P1135–D1225. C842 and C897 form a disulfide bridge. A disordered region spans residues L1336–N1360. One can recognise an Ig-like 6 domain in the interval P1679–S1762. A disulfide bond links C1700 and C1751. 3 coiled-coil regions span residues L1766–K1786, Q2011–S2038, and I2065–E2085. The interval R2155 to A2177 is disordered. Over residues R2163–P2172 the composition is skewed to basic residues. Positions L2205 to L2231 form a coiled coil. 2 disordered regions span residues I2298–A2459 and K2614–A2637. Residues R2309–N2323 show a composition bias toward low complexity. Positions L2324–E2341 are enriched in polar residues. Residues L2606 to E2630 adopt a coiled-coil conformation. The span at E2621 to T2636 shows a compositional bias: acidic residues. Ig-like domains are found at residues K3095–Y3177 and T3179–S3264. Positions E3362–S3692 are disordered. The segment covering S3655 to N3665 has biased composition (acidic residues). Ig-like domains are found at residues P3789–V3878, P3897–D3985, and P4038–T4125. Cystine bridges form between C3919–C3969 and C4059–C4109. 14 disordered regions span residues Q4553–T4599, T4634–E4699, G4750–V4814, P4826–P4855, S4912–K4931, P4950–S4969, P4989–E5216, G5267–P5294, P5306–S5325, P5345–P5372, G5428–T6101, V6127–P6157, S6214–E6900, and A6930–L8453. The segment covering R4555 to S4577 has biased composition (basic and acidic residues). 56 PVET repeats span residues T4599–P4626, V4627–P4665, V4666–T4704, P4755–P4787, V4788–P4826, V4827–T4865, A4917–P4948, V4949–P4987, V4988–P5026, V5027–P5065, V5066–P5104, V5105–P5143, V5144–P5182, V5183–T5221, A5273–P5304, V5305–P5343, V5344–T5382, A5434–P5465, V5466–P5504, V5505–P5543, V5544–P5582, V5583–P5621, V5622–S5660, V5661–S5699, V5700–P5738, V5739–Q5777, V5778–P5816, V5817–P5855, V5856–S5894, V5895–P5933, V5934–Q5972, V5973–P6011, V6012–Q6050, V6051–S6089, V6090–Q6128, V6129–T6167, A6219–P6250, V6251–P6289, V6290–P6328, V6329–P6367, V6368–P6406, V6407–S6445, V6446–S6484, V6485–P6523, V6524–Q6562, V6563–P6601, V6602–P6640, V6641–Q6679, V6680–P6718, V6719–A6757, V6758–P6796, V6797–P6835, V6836–P6874, V6875–P6913, V6914–P6952, and V6953–K6991. Basic and acidic residues-rich tracts occupy residues T4638–S4651 and T4677–E4691. Residues T4960–S4969 show a composition bias toward basic and acidic residues. Basic and acidic residues predominate over residues T5038 to S5051. 2 stretches are compositionally biased toward basic and acidic residues: residues T5116–S5129 and T5155–S5168. The stretch at A5212–V5235 forms a coiled coil. Over residues T5316–S5325 the composition is skewed to basic and acidic residues. 2 stretches are compositionally biased toward basic and acidic residues: residues T5477–S5490 and T5516–S5529. Composition is skewed to basic and acidic residues over residues P6690–S6704, P6729–S6743, P6768–S6782, P6807–S6821, P6846–S6860, and P6885–S6899. 4 stretches are compositionally biased toward basic and acidic residues: residues E6972 to K7606, L7613 to K7630, L7637 to K8062, and L8069 to L8453. Positions Q6984–K7812 form a coiled coil. 96 BLUE repeats span residues E6992–K6996, H6997–K7012, L7013–K7028, L7029–K7044, L7045–K7060, L7061–K7076, L7077–K7092, L7093–K7108, L7109–K7124, L7125–K7140, L7141–K7156, L7157–K7172, L7173–K7188, L7189–K7204, L7205–K7220, L7221–K7236, L7237–K7252, L7253–K7268, L7269–K7284, L7285–K7300, L7301–K7316, L7317–R7332, L7333–K7348, L7349–K7364, L7365–K7380, L7381–K7396, L7397–K7412, L7413–K7428, L7429–K7444, L7445–K7460, L7461–K7476, L7477–K7492, L7493–K7508, L7509–K7524, L7525–K7540, L7541–K7556, L7557–K7572, L7573–K7588, L7589–N7604, F7605–K7620, L7621–N7628, F7629–K7644, L7645–K7652, L7653–K7668, L7669–K7684, L7685–K7700, L7701–K7716, L7717–K7732, L7733–K7748, L7749–K7764, L7765–K7772, L7773–K7788, L7789–K7804, L7805–K7820, L7821–K7836, L7837–K7852, L7853–K7868, L7869–K7884, L7885–K7900, L7901–K7916, L7917–K7932, L7933–K7948, L7949–K7964, L7965–K7980, L7981–K7996, L7997–K8012, L8013–K8028, L8029–K8044, L8045–N8060, F8061–K8076, L8077–K8084, L8085–K8100, L8101–K8116, L8117–K8132, L8133–K8148, L8149–K8164, L8165–K8180, L8181–K8196, L8197–K8212, L8213–K8228, L8229–K8244, L8245–K8260, L8261–K8276, L8277–K8292, L8293–K8308, L8309–K8324, L8325–K8340, L8341–K8356, L8357–D8371, L8373–K8388, L8389–K8404, L8405–K8420, L8421–K8436, L8437–K8452, L8453–K8468, and L8469–K8484. Positions K7876–K8273 form a coiled coil. Residues K8316–Q8490 are a coiled coil. Residues K8599–E8611 are compositionally biased toward basic residues. The disordered stretch occupies residues K8599–S8626. The segment covering K8612–S8626 has biased composition (basic and acidic residues). The 92-residue stretch at K8950–Y9041 folds into the Fibronectin type-III 1 domain. 20 disordered regions span residues I9079–E9104, V9147–E9436, E9481–S9609, A9702–I10224, E10239–P10274, Q10539–T11018, E11030–Q11111, K11123–T11213, A11225–S11387, K11420–L11592, L11624–L11825, L11872–S11955, T11996–N12054, G12397–R12418, E12537–S12974, E13026–V13045, A13065–K13261, Q13283–K13514, E13553–L13574, and E13594–G13874. Residues K9084–K9093 are compositionally biased toward basic residues. Basic and acidic residues-rich tracts occupy residues V9172–L9184 and T9191–K9202. The span at S9213–Q9231 shows a compositional bias: polar residues. Positions S9232–P9267 are enriched in basic and acidic residues. Residues S9273–A9283 show a composition bias toward low complexity. The span at E9295 to P9332 shows a compositional bias: basic and acidic residues. A compositionally biased stretch (low complexity) spans S9346–S9359. Residues A9371–Q9510 are a coiled coil. Composition is skewed to basic and acidic residues over residues V9373–E9436 and E9481–K9521. Positions S9547–T9558 are enriched in low complexity. Positions T9577–D9749 form a coiled coil. Composition is skewed to basic and acidic residues over residues S9578–S9609 and A9702–P9783. A compositionally biased stretch (polar residues) spans S9798–V9809. 3 stretches are compositionally biased toward basic and acidic residues: residues E9819–P10004, E10040–N10149, and V10162–E10196. Coiled coils occupy residues K9822–A9995 and E10046–K10129. The segment covering K10197–D10206 has biased composition (basic residues). Residues T10207–I10224 show a composition bias toward basic and acidic residues. The span at E10239–K10250 shows a compositional bias: polar residues. The Fibronectin type-III 2 domain occupies K10461 to E10553. The span at E10566–F10609 shows a compositional bias: basic and acidic residues. Residues S10612–H10637 show a composition bias toward polar residues. Positions I10663–P10680 are enriched in acidic residues. Over residues M10707 to E10716 the composition is skewed to basic and acidic residues. The span at A10779–N10790 shows a compositional bias: polar residues. 2 stretches are compositionally biased toward basic and acidic residues: residues Q10840–M10852 and K10863–D10884. Residues L10961 to G10975 show a composition bias toward polar residues. Basic and acidic residues-rich tracts occupy residues I10999–E11009, S11045–D11055, and S11076–N11089. The stretch at T11018–Q11064 forms a coiled coil. The segment covering T11090–Q11108 has biased composition (polar residues). Over residues K11159–H11173 the composition is skewed to basic and acidic residues. Residues L11174 to T11187 show a composition bias toward low complexity. Basic and acidic residues-rich tracts occupy residues K11195–D11211, I11271–K11280, and E11295–L11318. Polar residues predominate over residues S11374 to S11387. 2 stretches are compositionally biased toward basic and acidic residues: residues K11440–K11464 and G11472–T11485. A compositionally biased stretch (polar residues) spans M11503 to A11515. Basic and acidic residues-rich tracts occupy residues L11624–K11635, A11645–E11669, and V11722–V11735. Polar residues predominate over residues E11754–V11767. The span at A11916–Q11937 shows a compositional bias: basic and acidic residues. A coiled-coil region spans residues E12408–N12428. Residues P12432–D12547 form the Ig-like 12 domain. Composition is skewed to basic and acidic residues over residues E12537 to D12547, L12555 to K12567, and V12609 to A12689. The span at S12690–P12701 shows a compositional bias: low complexity. Over residues T12729–I12740 the composition is skewed to polar residues. 3 stretches are compositionally biased toward basic and acidic residues: residues E12766 to S12839, E12852 to K12865, and P12889 to S12940. Residues K12797–I12828 are a coiled coil. Residues A12980 to K13103 adopt a coiled-coil conformation. 7 stretches are compositionally biased toward basic and acidic residues: residues A13065–E13124, P13133–G13145, T13176–T13191, E13203–K13261, Q13283–A13327, A13337–K13354, and L13361–P13416. Residues L13237–K13380 adopt a coiled-coil conformation. A compositionally biased stretch (polar residues) spans S13431–V13442. Positions E13452–K13514 are enriched in basic and acidic residues. Positions K13455 to A13628 form a coiled coil. Basic and acidic residues predominate over residues E13594 to P13637. Low complexity predominate over residues S13651–S13662. Residues K13684–T13696 are compositionally biased toward polar residues. The span at I13697–P13735 shows a compositional bias: basic and acidic residues. Positions S13747–S13760 are enriched in low complexity. Over residues K13761–P13770 the composition is skewed to basic and acidic residues. Residues S13784–D13793 show a composition bias toward polar residues. Composition is skewed to basic and acidic residues over residues I13795–E13808 and S13824–T13843. One can recognise an Ig-like 13 domain in the interval P13963–Y14036. 3 Fibronectin type-III domains span residues A14153–P14247, V14253–G14348, and V14350–D14448. Ig-like domains follow at residues P14451 to S14542, S14550 to N14634, and P14638 to E14727. Cysteines 14568 and 14618 form a disulfide. Fibronectin type-III domains are found at residues A14826–S14920 and I14937–G15027. Residues V15011 to K15180 are disordered. Basic and acidic residues-rich tracts occupy residues K15034–V15060 and K15085–R15117. Residues G15118–T15132 are compositionally biased toward polar residues. A compositionally biased stretch (basic and acidic residues) spans S15133–E15177. Ig-like domains are found at residues K15180 to A15274 and P15283 to R15371. Fibronectin type-III domains are found at residues P15383–K15475 and Q15503–S15596. The tract at residues T15470–Q15503 is disordered. Basic and acidic residues predominate over residues K15473–Q15503. Ig-like domains lie at P15599–T15687 and P15692–T15786. Residues A15791–N15883 enclose the Fibronectin type-III 10 domain. The Protein kinase domain maps to Y15934–I16189. ATP is bound by residues L15940–V15948 and K15963. D16055 serves as the catalytic Proton acceptor. The tract at residues K16206 to T16264 is autoinhibitory domain. Ig-like domains are found at residues P16268 to S16358, G16500 to N16575, P16605 to V16692, and P16705 to T16789. Disulfide bonds link C16290–C16342, C16508–C16571, C16627–C16677, and C16726–C16778. The interval L16805–Q16827 is disordered. Ig-like domains lie at P16829–V16918, P16932–S17025, and P17037–S17126. Residues Q17121–V17169 are disordered. A compositionally biased stretch (basic and acidic residues) spans K17129 to K17150. Positions R17154–V17245 constitute a Fibronectin type-III 11 domain. Ig-like domains lie at P17249–T17336, P17358–A17447, P17457–A17548, P17570–I17661, P17676–T17765, P17782–S17873, P18008–D18097, P18121–S18213, P18224–D18316, P18329–T18417, and P18429–S18519. 2 disulfides stabilise this stretch: C17379-C17431 and C17478-C17530. C17697 and C17754 are disulfide-bonded. Cysteines 18143 and 18195 form a disulfide.

This sequence belongs to the protein kinase superfamily. CAMK Ser/Thr protein kinase family. In terms of assembly, interacts (via C-terminus) with myosin. Interacts with actin. Requires Mg(2+) as cofactor. Expression is restricted to body wall, enteric and vulval muscles.

Its subcellular location is the cytoplasm. The protein resides in the myofibril. It is found in the sarcomere. It localises to the a band. The protein localises to the i band. Its subcellular location is the nucleus membrane. The enzyme catalyses L-seryl-[protein] + ATP = O-phospho-L-seryl-[protein] + ADP + H(+). It carries out the reaction L-threonyl-[protein] + ATP = O-phospho-L-threonyl-[protein] + ADP + H(+). Serine/threonine-protein kinase. Key component in the assembly and functioning of muscles. By providing connections at the level of individual microfilaments, it contributes to the fine balance of forces between the two halves of the sarcomere. The size and extensibility of the cross-links are the main determinants of sarcomere extensibility properties of muscle. In non-muscle cells, seems to play a role in chromosome condensation and chromosome segregation during mitosis. Might link the lamina network to chromatin or nuclear actin, or both during interphase. In Caenorhabditis elegans, this protein is Titin homolog.